The sequence spans 731 residues: Radial spoke head 10 homolog B (731 aa).

Positions 1 to 69 (MARGDNMKSS…PNENQPIGEH (69 aa)) are disordered. Over residues 7–17 (MKSSNKSTPEP) the composition is skewed to polar residues. Low complexity-rich tracts occupy residues 18–36 (TLSK…SESV) and 46–57 (SSSAVCSASTVS). MORN repeat units lie at residues 86–108 (YEGE…GGHV), 109–131 (YKGS…DGLK), 132–154 (YQGD…NGST), 155–177 (YEGE…KTLT), 179–201 (YRGQ…QEAT), 204–226 (YKGE…SGNV), 227–249 (YEGQ…DLDQ), 251–273 (YSGQ…RKRA), 284–306 (YTGD…SGAL), and 307–329 (YCGQ…NGRV). Disordered stretches follow at residues 353–377 (TTPF…SPLG) and 709–731 (KQEQ…TSIH). A compositionally biased stretch (low complexity) spans 363-377 (SKGASQSSSNASPLG). The span at 722-731 (VTTTSVTSIH) shows a compositional bias: polar residues.

Its subcellular location is the cytoplasm. It is found in the cytoskeleton. The protein resides in the cilium axoneme. It localises to the cell projection. The protein localises to the cilium. Its subcellular location is the flagellum. In terms of biological role, may function as part of axonemal radial spoke complexes. Radial spoke complexes are important for ciliary motility. The sequence is that of Radial spoke head 10 homolog B (rsph10b) from Danio rerio (Zebrafish).